A 201-amino-acid chain; its full sequence is L(+)-tartrate dehydratase subunit beta (201 aa).

H37 is a catalytic residue.

The protein belongs to the class-I fumarase family. Heterotetramer of two alpha and two beta subunits.

It carries out the reaction (2R,3R)-tartrate = oxaloacetate + H2O. The sequence is that of L(+)-tartrate dehydratase subunit beta (ttdB) from Shigella boydii serotype 4 (strain Sb227).